The primary structure comprises 846 residues: Matrin-3 (846 aa).

Ser2 carries the post-translational modification N-acetylserine. Residue Lys3 is modified to N6-acetyllysine; alternate. Lys3 is covalently cross-linked (Glycyl lysine isopeptide (Lys-Gly) (interchain with G-Cter in SUMO2); alternate). Phosphoserine occurs at positions 4, 9, 14, 22, 41, 118, and 126. Residues Lys132 and Lys146 each participate in a glycyl lysine isopeptide (Lys-Gly) (interchain with G-Cter in SUMO2) cross-link. Disordered stretches follow at residues 147 to 174 and 187 to 213; these read RRRTEEGPTLSYGRDGRSATREPPYRVP and DSFDDRGPSLNPVLDYDHGSRSQESGY. At Thr150 the chain carries Phosphothreonine. Position 157 is a phosphoserine (Ser157). At Tyr158 the chain carries Phosphotyrosine. Basic and acidic residues predominate over residues 160–174; sequence RDGRSATREPPYRVP. Ser164, Ser188, and Ser195 each carry phosphoserine. Positions 201–213 are enriched in basic and acidic residues; the sequence is DYDHGSRSQESGY. Phosphotyrosine is present on Tyr202. Phosphoserine occurs at positions 206, 208, and 211. Residue Tyr219 is modified to Phosphotyrosine. Residue Ser234 is modified to Phosphoserine. A Glycyl lysine isopeptide (Lys-Gly) (interchain with G-Cter in SUMO2) cross-link involves residue Lys245. Residue Ser264 is modified to Phosphoserine. A Glycyl lysine isopeptide (Lys-Gly) (interchain with G-Cter in SUMO2) cross-link involves residue Lys269. Ser275 is subject to Phosphoserine. The disordered stretch occupies residues 342 to 394; the sequence is PFMLQQSTNPAPGILGPPPPSFHLGGPAVGPRGNLGAGNGNLQGPRHMQKGRV. Residues 398–473 form the RRM 1 domain; that stretch reads RVVHIMDFQR…KPVRVHLSQK (76 aa). Residues Lys478, Lys487, and Lys491 each participate in a glycyl lysine isopeptide (Lys-Gly) (interchain with G-Cter in SUMO2) cross-link. Residues 496-571 form the RRM 2 domain; the sequence is RVIHLSNLPH…RCVKVDLSEK (76 aa). A phosphoserine mark is found at Ser509 and Ser511. Lys515 participates in a covalent cross-link: Glycyl lysine isopeptide (Lys-Gly) (interchain with G-Cter in SUMO2). At Lys522 the chain carries N6-acetyllysine; alternate. Lys522 is covalently cross-linked (Glycyl lysine isopeptide (Lys-Gly) (interchain with G-Cter in SUMO2); alternate). Ser533 is modified (phosphoserine). Residues Lys554 and Lys555 each participate in a glycyl lysine isopeptide (Lys-Gly) (interchain with G-Cter in SUMO2) cross-link. N6-acetyllysine is present on Lys571. Residues 588–779 are disordered; the sequence is KKDKSRKRSY…EDYTIPDEYR (192 aa). 4 positions are modified to phosphoserine: Ser596, Ser598, Ser604, and Ser606. Positions 600–642 are enriched in basic and acidic residues; that stretch reads DGKESPSDKKSKTDAQKTESPAEGKEQEEKSGEDGEKDTKDDQ. Glycyl lysine isopeptide (Lys-Gly) (interchain with G-Cter in SUMO2) cross-links involve residues Lys616 and Lys629. The span at 652–664 shows a compositional bias: acidic residues; it reads ESEDELLVDEEEA. Ser653, Ser670, Ser672, and Ser673 each carry phosphoserine. A compositionally biased stretch (low complexity) spans 665-675; the sequence is AALLESGSSVG. The residue at position 678 (Thr678) is a Phosphothreonine. Position 688 is a phosphoserine (Ser688). The span at 688–703 shows a compositional bias: basic and acidic residues; that stretch reads SDGKKEPSDKAVKKDP. The Nuclear localization signal signature appears at 709 to 717; sequence SKKKLKKVD. Residues Lys718 and Lys735 each participate in a glycyl lysine isopeptide (Lys-Gly) (interchain with G-Cter in SUMO2) cross-link. Thr740 bears the Phosphothreonine mark. Phosphoserine occurs at positions 746 and 758. Basic and acidic residues predominate over residues 766-779; that stretch reads DENKEDYTIPDEYR. A Glycyl lysine isopeptide (Lys-Gly) (interchain with G-Cter in SUMO2) cross-link involves residue Lys769. A Matrin-type zinc finger spans residues 800-831; the sequence is FYCKLCSLFYTNEEVAKNTHCSSLPHYQKLKK. Lys835 carries the post-translational modification N6-acetyllysine; alternate. Residue Lys835 forms a Glycyl lysine isopeptide (Lys-Gly) (interchain with G-Cter in SUMO2); alternate linkage.

In terms of assembly, part of a complex consisting of SFPQ, NONO and MATR3. Interacts with AGO1 and AGO2. Part of a complex composed at least of ASH2L, EMSY, HCFC1, HSPA8, CCAR2, MATR3, MKI67, RBBP5, TUBB2A, WDR5 and ZNF335; this complex may have a histone H3-specific methyltransferase activity. Interacts with TARDBP. Part of the HDP-RNP complex composed of at least HEXIM1, PRKDC, XRCC5, XRCC6, paraspeckle proteins (SFPQ, NONO, PSPC1, RBM14, and MATR3) and NEAT1 RNA. Interacts with FUS. Interacts with IGF2BP1. Interacts with IGF2BP2 and IGF2BP3. Interacts with RBPMS.

The protein localises to the nucleus matrix. May play a role in transcription or may interact with other nuclear matrix proteins to form the internal fibrogranular network. In association with the SFPQ-NONO heteromer may play a role in nuclear retention of defective RNAs. Plays a role in the regulation of DNA virus-mediated innate immune response by assembling into the HDP-RNP complex, a complex that serves as a platform for IRF3 phosphorylation and subsequent innate immune response activation through the cGAS-STING pathway. Binds to N6-methyladenosine (m6A)-containing mRNAs and contributes to MYC stability by binding to m6A-containing MYC mRNAs. May bind to specific miRNA hairpins. The sequence is that of Matrin-3 (Matr3) from Mus musculus (Mouse).